A 508-amino-acid chain; its full sequence is CUGBP Elav-like family member 2 (508 aa).

Necessary for RNA-binding, TNNT2 exon 5 and NMDA R1 exon 21 inclusion regions lie at residues 1–283 (MRCP…LQNL) and 357–508 (LAGM…SKPY). 3 consecutive RRM domains span residues 40-123 (IKMF…PADS), 132-212 (RKLF…FADT), and 423-501 (ANLF…LKRS).

The protein belongs to the CELF/BRUNOL family. Interacts with A1CF. In terms of tissue distribution, expressed in tongue, spleen and brain (at protein level). Expressed in liver, thigh, stomach, lung and heart to very low levels (at protein level). Expressed in heart, brain, lung and muscle.

Its subcellular location is the nucleus. It is found in the cytoplasm. In terms of biological role, RNA-binding protein implicated in the regulation of several post-transcriptional events. Involved in pre-mRNA alternative splicing, mRNA translation and stability. Mediates exon inclusion and/or exclusion in pre-mRNA that are subject to tissue-specific and developmentally regulated alternative splicing. Specifically activates exon 5 inclusion of TNNT2 in embryonic, but not adult, skeletal muscle. Activates TNNT2 exon 5 inclusion by antagonizing the repressive effect of PTB. Acts both as an activator and as a repressor of a pair of coregulated exons: promotes inclusion of the smooth muscle (SM) exon but exclusion of the non-muscle (NM) exon in actinin pre-mRNAs. Promotes inclusion of exonS 21 and exclusion of exon 5 of the NMDA receptor R1 pre-mRNA. Involved in the apoB RNA editing activity. Increases COX2 mRNA stability and inhibits COX2 mRNA translation in epithelial cells after radiation injury. Modulates the cellular apoptosis program by regulating COX2-mediated prostaglandin E2 (PGE2) expression. Binds to (CUG)n triplet repeats in the 3'-UTR of transcripts such as DMPK. Binds to the muscle-specific splicing enhancer (MSE) intronic sites flanking the TNNT2 alternative exon 5. Binds preferentially to UG-rich sequences, in particular UG repeat and UGUU motifs. Binds to apoB mRNA, specifically to AU-rich sequences located immediately upstream of the edited cytidine. Binds AU-rich sequences in the 3'-UTR of COX2 mRNA. Binds to an intronic RNA element responsible for the silencing of exon 21 splicing. Binds to (CUG)n repeats. May be a specific regulator of miRNA biogenesis. Binds to primary microRNA pri-MIR140 and, with CELF1, negatively regulates the processing to mature miRNA. This chain is CUGBP Elav-like family member 2 (Celf2), found in Mus musculus (Mouse).